A 340-amino-acid polypeptide reads, in one-letter code: Peroxisomal coenzyme A diphosphatase 1, peroxisomal (340 aa).

A peroxisome-targeting transit peptide spans 1 to 7 (MILSQRR). The Nudix hydrolase domain maps to 37-199 (KRNSAVIILL…DEDVKSYQAE (163 aa)). The Nudix box motif lies at 77–99 (GKADYFQETFESVARREAEEEIG). Mg(2+) is bound by residues Glu93 and Glu97.

Belongs to the Nudix hydrolase family. PCD1 subfamily. The cofactor is Mn(2+). Requires Mg(2+) as cofactor. The size of the cleaved transit peptide can be of 7 or 8 residues.

It is found in the peroxisome. The enzyme catalyses CoA + H2O = (R)-4'-phosphopantetheine + adenosine 3',5'-bisphosphate + 2 H(+). It catalyses the reaction CoA-disulfide + H2O = 4'-phosphopantetheinyl-CoA disulfide + adenosine 3',5'-bisphosphate + 2 H(+). The catalysed reaction is 8-oxo-dGTP + H2O = 8-oxo-dGMP + diphosphate + H(+). It carries out the reaction 2-oxo-dATP + H2O = 2-oxo-dAMP + diphosphate + H(+). Diphosphatase (pyrophosphatase) with specificity for coenzyme A and CoA derivatives. Catalyzes the hydrolysis of the diphosphate linkage in CoA to give 3',5'-ADP and 4'-phosphopantetheine. Prefers oxidized CoA disulfide (CoASSCoA) over CoA as a substrate. May be required to remove potentially toxic oxidized CoA disulfide from peroxisomes to maintain the capacity for beta-oxidation of fatty acids. Can also hydrolyze 8-oxo-dGTP and 2-OH-dATP in vitro; therefore it may function as a sanitizing enzyme for oxidized nucleotides and may contribute to prevention of spontaneous mutagenesis due to the misincorporation of these oxidized nucleotides during DNA synthesis. Shows moderate activity in vitro with several short chain acyl-CoA esters and very low activity on 3'-dephospho-CoA while is not active with (deoxy)nucleoside 5'-triphosphates, nucleoside 5'-di- or monophosphates, diadenosine polyphosphates, nucleoside 5'-diphosphosugars, cytidine 5'-diphosphoalcohols, NAD(+), NADH, or FAD. The protein is Peroxisomal coenzyme A diphosphatase 1, peroxisomal (PCD1) of Saccharomyces cerevisiae (strain ATCC 204508 / S288c) (Baker's yeast).